The sequence spans 586 residues: Lipoprotein LpqB (586 aa).

Residues 1-17 (MVRSVFALVFAAVLLGG) form the signal peptide. The N-palmitoyl cysteine moiety is linked to residue cysteine 18. Cysteine 18 carries S-diacylglycerol cysteine lipidation. The disordered stretch occupies residues 26 to 45 (APQAIGTVERPAPSNLPKPI).

The protein belongs to the LpqB lipoprotein family.

The protein resides in the cell membrane. In Mycobacterium ulcerans (strain Agy99), this protein is Lipoprotein LpqB.